A 185-amino-acid polypeptide reads, in one-letter code: NADH-ubiquinone oxidoreductase chain 6 (185 aa).

Transmembrane regions (helical) follow at residues 3-23, 28-48, 54-74, 87-107, and 134-154; these read SLFMIFSLGIVGASLMVISTP, SVFWLVIAFVNAAVMFISLGL, IFIIVYVGAIAILFLFVIMLI, HFLPIGLSVIFLFYSLLTNSP, and ELVLIASLVLLVAMIGAILLA.

This sequence belongs to the complex I subunit 6 family.

It is found in the mitochondrion membrane. It catalyses the reaction a ubiquinone + NADH + 5 H(+)(in) = a ubiquinol + NAD(+) + 4 H(+)(out). Its function is as follows. Core subunit of the mitochondrial membrane respiratory chain NADH dehydrogenase (Complex I) that is believed to belong to the minimal assembly required for catalysis. Complex I functions in the transfer of electrons from NADH to the respiratory chain. The immediate electron acceptor for the enzyme is believed to be ubiquinone. The polypeptide is NADH-ubiquinone oxidoreductase chain 6 (ND6) (Sarcophyton glaucum (Toadstool umbrella leather coral)).